A 151-amino-acid chain; its full sequence is FIS1-related protein fis-2 (151 aa).

The chain crosses the membrane as a helical span at residues 126–146; that stretch reads LIGAAIVGGGALALAGLVAIF.

This sequence belongs to the FIS1 family.

It localises to the mitochondrion outer membrane. The protein resides in the peroxisome membrane. The protein localises to the mitochondrion. Involved in the fragmentation of the mitochondrial network. Involved in perinuclear clustering of the mitochondrial network. May act, redundantly with fis-1, downstream of mitochondrial fission, before the fission products participate in mitochondrial homeostasis, mitophagy, or apoptosis. Plays a role in apoptosis by promoting mitochondrial elimination and cell-death execution, acting downstream of caspase ced-3, and perhaps independently of dynamin GTPase drp-1, caspase ced-9 and apoptosis-inducing factor AIFM/wah-1. This chain is FIS1-related protein fis-2, found in Caenorhabditis elegans.